The primary structure comprises 546 residues: Cytochrome P450 monooxygenase gloP (546 aa).

A helical membrane pass occupies residues 17-37 (TLSGGILTFLFIVVIAHFVLT). Residues N189, N413, and N416 are each glycosylated (N-linked (GlcNAc...) asparagine). C492 is a heme binding site.

This sequence belongs to the cytochrome P450 family. Heme is required as a cofactor.

It localises to the membrane. The protein operates within mycotoxin biosynthesis. Functionally, cytochrome P450 monooxygenase; part of the gene cluster that mediates the biosynthesis of pneumocandins, lipohexapeptides of the echinocandin family that prevent fungal cell wall formation by non-competitive inhibition of beta-1,3-glucan synthase. The 10,12-dimethylmyristoyl side chain is synthesized by the reducing polyketide synthase gloL/GLPKS4. The thioesterase gloN/GLHYD exclusively interacts with gloL/GLPKS4 to maintain turnover of the polyketide side chain. The 10R,12S-dimethylmyristic acid is then transferred to the first thiolation domain of the nonribosomal peptide synthetase gloA/GLNRPS4 by the acyl-AMP ligase gloD/GLligase, followed by its acylation to L-ornithine to trigger elongation of the cyclic hexapeptide. L-ornithine, 4R-hydroxyl-L-proline (generated from L-proline by the dioxygenase gloF/GLOXY2), 3S-hydroxyl-L-homotyrosine (generated by gloG/GLHtyB, gloH/GLHtyA, gloI/GLHtyC, gloJ/GLHtyD and hydroxylated at C-3 by the dioxygenase gloM/GLOXY1), 3R-hydroxyl-L-glutamine (generated from L-glutamine probably by the dioxygenase gloE/GLOXY3) and 3S-hydroxyl-L-proline (generated from L-proline by the dioxygenase gloF/GLOXY2 to yield pneumocandin B0), or 3S-hydroxyl-4S-methyl-L-proline (generated from L-leucine by the dioxygenase gloC/GLOXY4 to yield pneumocandin A0) are sequentially added to the growing chain. The last C domain of gloA/GLNRPS4 is proposed to be responsible for cyclization by condensation to form the peptide bond between L-ornithine and 3S-hydroxyl-4S-methyl-L-proline (for pneumocandin A0) or 3S-hydroxyl-L-proline (for pneumocandin B0). Finally, the subsequent C-4 hydroxylation of 3S-hydroxyl-L-homotyrosine and L-ornithine dihydroxylation at C-4 and C-5 are performed by the cytochrome P450 monooxygenases gloP/GLP450-1 and gloO/GLP450-2, respectively. This Glarea lozoyensis (strain ATCC 20868 / MF5171) protein is Cytochrome P450 monooxygenase gloP.